A 502-amino-acid polypeptide reads, in one-letter code: Beta-amyrin 28-monooxygenase CYP716A379 (502 aa).

A helical; Signal-anchor for type II membrane protein transmembrane segment spans residues 3 to 23 (LITLLSALLVLAIVSLSTFFV). 2 N-linked (GlcNAc...) asparagine glycosylation sites follow: Asn-88 and Asn-181. A heme-binding site is contributed by Cys-444.

It belongs to the cytochrome P450 family. Heme serves as cofactor. In terms of tissue distribution, mainly expressed in flowers and flower buds, to a lesser extent in young leaves and, at low levels, in old leaves, stems and roots.

The protein resides in the membrane. The enzyme catalyses beta-amyrin + 3 reduced [NADPH--hemoprotein reductase] + 3 O2 = oleanolate + 3 oxidized [NADPH--hemoprotein reductase] + 4 H2O + 4 H(+). It participates in secondary metabolite biosynthesis; terpenoid biosynthesis. Component of the oleanane-type triterpene saponins (e.g. saponarioside A and saponarioside B) biosynthetic pathway, leading to the production of natural products with detergent properties used as traditional sources of soap. An oxidoreductase that facilitates the oxidation of the methyl group to a carboxyl group at the C-28 position of beta-amyrin, resulting in the formation of oleanolic acid. Catalyzes also the subsequent oxidation of the methyl group to a&lt; carboxyl group at the C-16 alpha position of oleanolic acid, resulting in the formation of echinocystic acid. The protein is Beta-amyrin 28-monooxygenase CYP716A379 of Saponaria officinalis (Common soapwort).